Reading from the N-terminus, the 652-residue chain is RNA-binding KH domain-containing protein RCF3 (652 aa).

Residues 1–14 are compositionally biased toward basic and acidic residues; that stretch reads MERSRSKRNYHYDQ. Residues 1-63 are disordered; sequence MERSRSKRNY…NGRPSKSHPE (63 aa). Over residues 34 to 55 the composition is skewed to gly residues; sequence FGGGGGGNNRYRGGGGGGGGNG. KH domains are found at residues 67-139 and 175-245; these read TTTY…QEAL and RVVT…LAIV. Positions 253–307 are disordered; sequence QHRDRSNFQGRSHSPERSFAAAGDDYMPQLRRQSSDRFPRGNFRNNNFSSRQSNY. The span at 292-306 shows a compositional bias: low complexity; it reads RGNFRNNNFSSRQSN. KH domains follow at residues 324-391, 408-476, and 576-640; these read ELVF…QEAL, LITT…LVEL, and RSTL…QSLL.

In terms of assembly, homodimer. Interacts with CPL1. Interacts with RS40 and RS41. Interacts with DRB1/HYL1 and SE. Interacts with CPL2. As to expression, expressed in roots, cotyledons, leaves, flowers and siliques.

The protein localises to the nucleus. It localises to the nucleus speckle. Acts as a negative regulator of osmotic stress-induced gene expression. Involved in the regulation of thermotolerance responses under heat stress. Functions as an upstream regulator of heat stress transcription factor (HSF) genes. Negatively regulates HSFA1A, HSFA1B and HSFA1D, but positively controls the expression of HSFA1E, HSFA3, HSFA9, HSFB3, and DREB2C. Forms a complex with CPL1 that modulates co-transcriptional processes such as mRNA capping and polyadenylation, and functions to repress stress-inducible gene expression. Regulates pre-mRNA processing under salt stress. Involved in primary miRNA processing and pri-miRNA biogenesis. Binds both intronless and intron-containing pri-miRNAs. Acts as a regulator of biotic stress response gene expression and basal JA-mediated responses involved in defense. Acts as a negative regulator of resistance to the fungal pathogen Fusarium oxysporum. The chain is RNA-binding KH domain-containing protein RCF3 from Arabidopsis thaliana (Mouse-ear cress).